Consider the following 113-residue polypeptide: Putative membrane protein insertion efficiency factor (113 aa).

The protein belongs to the UPF0161 family.

It is found in the cell inner membrane. Its function is as follows. Could be involved in insertion of integral membrane proteins into the membrane. The polypeptide is Putative membrane protein insertion efficiency factor (Campylobacter concisus (strain 13826)).